The following is a 300-amino-acid chain: Protoheme IX farnesyltransferase (300 aa).

A run of 9 helical transmembrane segments spans residues 24-44 (VTQLAVFCAVIGMFLATPGMV), 48-68 (VLLGGTVGIGLLAGSAFAINC), 94-114 (LQILAFSTVLGGLGAWTLYTF), 118-138 (LTMWLTIATFVGYAVIYTLLL), 146-166 (IVIGGASGAMPPALGWAAVTG), 172-192 (AWILVLIIFVWTPPHFWVLAL), 217-237 (LHILLYTVILFAVTMMPFISG), 239-259 (SGAVYLTSAVLLGAIFLAYAW), and 278-298 (IVYLSLLFAALLVDHYARPVI).

Belongs to the UbiA prenyltransferase family. Protoheme IX farnesyltransferase subfamily.

Its subcellular location is the cell inner membrane. It catalyses the reaction heme b + (2E,6E)-farnesyl diphosphate + H2O = Fe(II)-heme o + diphosphate. It functions in the pathway porphyrin-containing compound metabolism; heme O biosynthesis; heme O from protoheme: step 1/1. Functionally, converts heme B (protoheme IX) to heme O by substitution of the vinyl group on carbon 2 of heme B porphyrin ring with a hydroxyethyl farnesyl side group. In Burkholderia thailandensis (strain ATCC 700388 / DSM 13276 / CCUG 48851 / CIP 106301 / E264), this protein is Protoheme IX farnesyltransferase.